A 484-amino-acid chain; its full sequence is tRNA-2-methylthio-N(6)-dimethylallyladenosine synthase (484 aa).

An MTTase N-terminal domain is found at 36–153; the sequence is GKLYIKTHGC…LPELIRARRE (118 aa). [4Fe-4S] cluster-binding residues include Cys-45, Cys-82, Cys-116, Cys-190, Cys-194, and Cys-197. The Radical SAM core domain occupies 176–415; the sequence is RAEGPSAFVS…HISAHAASIS (240 aa). The TRAM domain maps to 416–479; the sequence is QSMVGSVQRV…SNSLRGRIQL (64 aa). The disordered stretch occupies residues 428-450; it reads EGPSRRDPNELTGKSENMRPVNF.

It belongs to the methylthiotransferase family. MiaB subfamily. In terms of assembly, monomer. [4Fe-4S] cluster is required as a cofactor.

It is found in the cytoplasm. The enzyme catalyses N(6)-dimethylallyladenosine(37) in tRNA + (sulfur carrier)-SH + AH2 + 2 S-adenosyl-L-methionine = 2-methylsulfanyl-N(6)-dimethylallyladenosine(37) in tRNA + (sulfur carrier)-H + 5'-deoxyadenosine + L-methionine + A + S-adenosyl-L-homocysteine + 2 H(+). Its function is as follows. Catalyzes the methylthiolation of N6-(dimethylallyl)adenosine (i(6)A), leading to the formation of 2-methylthio-N6-(dimethylallyl)adenosine (ms(2)i(6)A) at position 37 in tRNAs that read codons beginning with uridine. This chain is tRNA-2-methylthio-N(6)-dimethylallyladenosine synthase, found in Xanthomonas oryzae pv. oryzae (strain PXO99A).